Consider the following 715-residue polypeptide: Fatty acid oxidation complex subunit alpha (715 aa).

The segment at 1–190 (MIYEGKAITV…KVGAVDAVVA (190 aa)) is enoyl-CoA hydratase/isomerase. Asp297 contributes to the substrate binding site. The segment at 312 to 715 (KDVKQAAVLG…MAKNGQSFFG (404 aa)) is 3-hydroxyacyl-CoA dehydrogenase. Residues Met325, Asp344, 401–403 (VVE), Lys408, and Ser430 contribute to the NAD(+) site. His451 functions as the For 3-hydroxyacyl-CoA dehydrogenase activity in the catalytic mechanism. Asn454 is an NAD(+) binding site. Substrate contacts are provided by Asn501 and Tyr660.

The protein in the N-terminal section; belongs to the enoyl-CoA hydratase/isomerase family. In the C-terminal section; belongs to the 3-hydroxyacyl-CoA dehydrogenase family. In terms of assembly, heterotetramer of two alpha chains (FadB) and two beta chains (FadA).

The catalysed reaction is a (3S)-3-hydroxyacyl-CoA + NAD(+) = a 3-oxoacyl-CoA + NADH + H(+). The enzyme catalyses a (3S)-3-hydroxyacyl-CoA = a (2E)-enoyl-CoA + H2O. It carries out the reaction a 4-saturated-(3S)-3-hydroxyacyl-CoA = a (3E)-enoyl-CoA + H2O. It catalyses the reaction (3S)-3-hydroxybutanoyl-CoA = (3R)-3-hydroxybutanoyl-CoA. The catalysed reaction is a (3Z)-enoyl-CoA = a 4-saturated (2E)-enoyl-CoA. The enzyme catalyses a (3E)-enoyl-CoA = a 4-saturated (2E)-enoyl-CoA. It participates in lipid metabolism; fatty acid beta-oxidation. In terms of biological role, involved in the aerobic and anaerobic degradation of long-chain fatty acids via beta-oxidation cycle. Catalyzes the formation of 3-oxoacyl-CoA from enoyl-CoA via L-3-hydroxyacyl-CoA. It can also use D-3-hydroxyacyl-CoA and cis-3-enoyl-CoA as substrate. The protein is Fatty acid oxidation complex subunit alpha of Pseudomonas fluorescens (strain ATCC BAA-477 / NRRL B-23932 / Pf-5).